We begin with the raw amino-acid sequence, 376 residues long: Multiphosphoryl transfer protein (376 aa).

Residues 2–142 form the PTS EIIA type-2 domain; that stretch reads FQLSVQDIHP…EELRALLMGE (141 aa). His62 functions as the Tele-phosphohistidine intermediate; for EIIA activity in the catalytic mechanism. At His62 the chain carries Phosphohistidine; by HPr. Positions 156 to 284 are m domain; sequence TLDIVASDLL…LTSDDAPTDD (129 aa). The HPr domain maps to 285 to 375; it reads VLSAEFVVRN…DAIAAGLGEG (91 aa). The Pros-phosphohistidine intermediate; for HPr activity role is filled by His299. A Phosphohistidine; by EI modification is found at His299.

The protein resides in the cytoplasm. Its function is as follows. The phosphoenolpyruvate-dependent sugar phosphotransferase system (sugar PTS), a major carbohydrate active transport system, catalyzes the phosphorylation of incoming sugar substrates concomitantly with their translocation across the cell membrane. The enzyme II FruAB PTS system is involved in fructose transport. The protein is Multiphosphoryl transfer protein of Escherichia coli O157:H7.